We begin with the raw amino-acid sequence, 463 residues long: Glutamate--tRNA ligase 2 (463 aa).

The 'HIGH' region signature appears at 11–21; the sequence is PSPTGYLHIGG. Positions 240-244 match the 'KMSKS' region motif; that stretch reads KLSKR. Residue K243 participates in ATP binding.

This sequence belongs to the class-I aminoacyl-tRNA synthetase family. Glutamate--tRNA ligase type 1 subfamily. Monomer.

It is found in the cytoplasm. It catalyses the reaction tRNA(Glu) + L-glutamate + ATP = L-glutamyl-tRNA(Glu) + AMP + diphosphate. Catalyzes the attachment of glutamate to tRNA(Glu) in a two-step reaction: glutamate is first activated by ATP to form Glu-AMP and then transferred to the acceptor end of tRNA(Glu). The chain is Glutamate--tRNA ligase 2 from Campylobacter jejuni (strain RM1221).